A 421-amino-acid chain; its full sequence is Gamma-glutamyl phosphate reductase (421 aa).

This sequence belongs to the gamma-glutamyl phosphate reductase family.

It localises to the cytoplasm. It carries out the reaction L-glutamate 5-semialdehyde + phosphate + NADP(+) = L-glutamyl 5-phosphate + NADPH + H(+). It functions in the pathway amino-acid biosynthesis; L-proline biosynthesis; L-glutamate 5-semialdehyde from L-glutamate: step 2/2. In terms of biological role, catalyzes the NADPH-dependent reduction of L-glutamate 5-phosphate into L-glutamate 5-semialdehyde and phosphate. The product spontaneously undergoes cyclization to form 1-pyrroline-5-carboxylate. The chain is Gamma-glutamyl phosphate reductase from Acinetobacter baumannii (strain ATCC 17978 / DSM 105126 / CIP 53.77 / LMG 1025 / NCDC KC755 / 5377).